We begin with the raw amino-acid sequence, 141 residues long: ATP synthase epsilon chain (141 aa).

This sequence belongs to the ATPase epsilon chain family. As to quaternary structure, F-type ATPases have 2 components, CF(1) - the catalytic core - and CF(0) - the membrane proton channel. CF(1) has five subunits: alpha(3), beta(3), gamma(1), delta(1), epsilon(1). CF(0) has three main subunits: a, b and c.

Its subcellular location is the cell inner membrane. In terms of biological role, produces ATP from ADP in the presence of a proton gradient across the membrane. The protein is ATP synthase epsilon chain (atpC) of Acidithiobacillus ferridurans.